We begin with the raw amino-acid sequence, 639 residues long: Kinesin-like protein KIF22 (639 aa).

Residues arginine 18–isoleucine 345 enclose the Kinesin motor domain. Glycine 102 to threonine 109 is an ATP binding site. Residues isoleucine 358–serine 400 form a disordered region. Positions threonine 388 to aspartate 397 are enriched in polar residues. The stretch at lysine 439 to aspartate 484 forms a coiled coil. Residues glycine 549 to asparagine 552 carry the Important for regulated proteolytic degradation motif.

This sequence belongs to the TRAFAC class myosin-kinesin ATPase superfamily. Kinesin family. In terms of processing, ubiquitinated, leading to its subsequent proteasomal degradation.

The protein resides in the nucleus. The protein localises to the cytoplasm. It localises to the cytoskeleton. Kinesin family member that is involved in spindle formation and the movements of chromosomes during mitosis and meiosis. Binds to microtubules and to DNA. The sequence is that of Kinesin-like protein KIF22 (kif22) from Xenopus tropicalis (Western clawed frog).